Consider the following 118-residue polypeptide: Small ribosomal subunit protein bS6 (118 aa).

This sequence belongs to the bacterial ribosomal protein bS6 family.

In terms of biological role, binds together with bS18 to 16S ribosomal RNA. This chain is Small ribosomal subunit protein bS6, found in Parabacteroides distasonis (strain ATCC 8503 / DSM 20701 / CIP 104284 / JCM 5825 / NCTC 11152).